The following is a 187-amino-acid chain: Ribosome-recycling factor (187 aa).

The protein belongs to the RRF family.

It is found in the cytoplasm. Functionally, responsible for the release of ribosomes from messenger RNA at the termination of protein biosynthesis. May increase the efficiency of translation by recycling ribosomes from one round of translation to another. This Nitrobacter winogradskyi (strain ATCC 25391 / DSM 10237 / CIP 104748 / NCIMB 11846 / Nb-255) protein is Ribosome-recycling factor.